Here is a 138-residue protein sequence, read N- to C-terminus: Large ribosomal subunit protein uL16 (138 aa).

The segment covering 1–13 has biased composition (basic residues); that stretch reads MLQPARRKYRKEQ. The interval 1 to 22 is disordered; the sequence is MLQPARRKYRKEQKGRNTGVAT.

Belongs to the universal ribosomal protein uL16 family. Part of the 50S ribosomal subunit.

In terms of biological role, binds 23S rRNA and is also seen to make contacts with the A and possibly P site tRNAs. The sequence is that of Large ribosomal subunit protein uL16 from Polaromonas sp. (strain JS666 / ATCC BAA-500).